A 447-amino-acid chain; its full sequence is Signal recognition particle 54 kDa protein (447 aa).

GTP contacts are provided by residues 108-115 (GLYGMGKT), 188-192 (DTAGR), and 246-249 (TKLD).

It belongs to the GTP-binding SRP family. SRP54 subfamily. Part of the signal recognition particle protein translocation system, which is composed of SRP and FtsY. Archaeal SRP consists of a 7S RNA molecule of 300 nucleotides and two protein subunits: SRP54 and SRP19.

Its subcellular location is the cytoplasm. The enzyme catalyses GTP + H2O = GDP + phosphate + H(+). Its function is as follows. Involved in targeting and insertion of nascent membrane proteins into the cytoplasmic membrane. Binds to the hydrophobic signal sequence of the ribosome-nascent chain (RNC) as it emerges from the ribosomes. The SRP-RNC complex is then targeted to the cytoplasmic membrane where it interacts with the SRP receptor FtsY. The sequence is that of Signal recognition particle 54 kDa protein from Methanopyrus kandleri (strain AV19 / DSM 6324 / JCM 9639 / NBRC 100938).